The sequence spans 964 residues: Chaperone protein ClpB4, mitochondrial (964 aa).

Residues 1-39 constitute a mitochondrion transit peptide; the sequence is MALRRLSKSVSSAIKAQYTLSRPSPLLRSRSLSSSPHYT. The 145-residue stretch at 83 to 227 folds into the Clp R domain; that stretch reads VNQNEFTEMA…KDAIKDVRGD (145 aa). 2 repeat regions span residues 88–153 and 164–227; these read FTEM…ISKQ and LGSS…VRGD. The tract at residues 242 to 490 is i; that stretch reads LEKYGNDLTE…KLKMEITSKP (249 aa). ATP contacts are provided by residues 287-294 and 690-697; these read GEPGVGKT and GPTGVGKT. Positions 616 to 807 are II; that stretch reads VTDLDIAEIV…VVIMTSNIGS (192 aa).

It belongs to the ClpA/ClpB family.

The protein resides in the mitochondrion. Its function is as follows. Molecular chaperone that does not seem to be involved in heat stress response or tolerance. The protein is Chaperone protein ClpB4, mitochondrial (CLPB4) of Arabidopsis thaliana (Mouse-ear cress).